The following is a 184-amino-acid chain: Ribosome-recycling factor (184 aa).

The protein belongs to the RRF family.

The protein resides in the cytoplasm. In terms of biological role, responsible for the release of ribosomes from messenger RNA at the termination of protein biosynthesis. May increase the efficiency of translation by recycling ribosomes from one round of translation to another. The polypeptide is Ribosome-recycling factor (Oleidesulfovibrio alaskensis (strain ATCC BAA-1058 / DSM 17464 / G20) (Desulfovibrio alaskensis)).